The primary structure comprises 1172 residues: Ras guanine nucleotide exchange factor W (1172 aa).

Composition is skewed to low complexity over residues 34-70 (PIYTNDNSNNNNNDETSSNISGSNSIQNLSLNNLNNL) and 78-87 (NSNSVNNTIS). Disordered stretches follow at residues 34–100 (PIYT…RSNT), 138–162 (KFLDQHTPPPSPKPEHLSGHLRIQQ), and 186–246 (FKRS…EIKD). A compositionally biased stretch (low complexity) spans 194–241 (QPPQSQSQQQQQLQLQQQQQQSMPNLSLGNNINSNNNNNNGSENNDIS). 6 consecutive transmembrane segments (helical) span residues 286-306 (IWLTIMIISIIFVLFIDDIIG), 320-340 (IMAVKCSIIGFFSIDIILNLF), 347-367 (FPGTIVFWLDLISLISIVTDI), 378-400 (VLSITVNTRIIRICGSFIRISLI), 432-452 (LTTNKIVLLALAVLFATQLLV), and 545-565 (ILHLCLTVFVILVLITINLLI). Residues 666–702 (LLGMLNEIDDSLQAAKEKVEEESIQNSILKKDIEDLY) are a coiled coil. The region spanning 765–903 (DLNVIQYATI…YIDSIHKRKM (139 aa)) is the N-terminal Ras-GEF domain. Residues 938-1170 (DISDIAIQIT…WKMSLSCEQR (233 aa)) form the Ras-GEF domain.

It is found in the membrane. Functionally, promotes the exchange of Ras-bound GDP by GTP. The polypeptide is Ras guanine nucleotide exchange factor W (gefW) (Dictyostelium discoideum (Social amoeba)).